The chain runs to 262 residues: Acyl-[acyl-carrier-protein]--UDP-N-acetylglucosamine O-acyltransferase (262 aa).

It belongs to the transferase hexapeptide repeat family. LpxA subfamily. In terms of assembly, homotrimer.

The protein resides in the cytoplasm. It catalyses the reaction a (3R)-hydroxyacyl-[ACP] + UDP-N-acetyl-alpha-D-glucosamine = a UDP-3-O-[(3R)-3-hydroxyacyl]-N-acetyl-alpha-D-glucosamine + holo-[ACP]. Its pathway is glycolipid biosynthesis; lipid IV(A) biosynthesis; lipid IV(A) from (3R)-3-hydroxytetradecanoyl-[acyl-carrier-protein] and UDP-N-acetyl-alpha-D-glucosamine: step 1/6. Its function is as follows. Involved in the biosynthesis of lipid A, a phosphorylated glycolipid that anchors the lipopolysaccharide to the outer membrane of the cell. The sequence is that of Acyl-[acyl-carrier-protein]--UDP-N-acetylglucosamine O-acyltransferase from Pectobacterium carotovorum subsp. carotovorum (strain PC1).